Here is a 284-residue protein sequence, read N- to C-terminus: Ribose-phosphate pyrophosphokinase (284 aa).

ATP is bound by residues 34 to 36 and 92 to 93; these read DNE and RQ. Residues His125 and Asp163 each contribute to the Mg(2+) site. Lys186 is an active-site residue. D-ribose 5-phosphate-binding positions include Arg188, Asp212, and 216 to 220; that span reads STGGT.

This sequence belongs to the ribose-phosphate pyrophosphokinase family. Class III (archaeal) subfamily. Homotetramer. It depends on Mg(2+) as a cofactor.

The protein localises to the cytoplasm. The catalysed reaction is D-ribose 5-phosphate + ATP = 5-phospho-alpha-D-ribose 1-diphosphate + AMP + H(+). It functions in the pathway metabolic intermediate biosynthesis; 5-phospho-alpha-D-ribose 1-diphosphate biosynthesis; 5-phospho-alpha-D-ribose 1-diphosphate from D-ribose 5-phosphate (route I): step 1/1. Activated by inorganic phosphate, with a maximal activity at 190 mM. Above this concentration inorganic phosphate progressively inhibits the kinase. Completely inhibited by ADP, and partially inhibited by alpha,beta-methylene ATP (mATP). Lack of allosteric regulation. Functionally, involved in the biosynthesis of the central metabolite phospho-alpha-D-ribosyl-1-pyrophosphate (PRPP) via the transfer of pyrophosphoryl group from ATP to 1-hydroxyl of ribose-5-phosphate (Rib-5-P). It can also use dATP as diphosphoryl donor. This Methanocaldococcus jannaschii (strain ATCC 43067 / DSM 2661 / JAL-1 / JCM 10045 / NBRC 100440) (Methanococcus jannaschii) protein is Ribose-phosphate pyrophosphokinase.